Reading from the N-terminus, the 523-residue chain is Metalloendopeptidase OMA1, mitochondrial (523 aa).

A mitochondrion-targeting transit peptide spans M1 to H45. A propeptide spanning residues I46–Q143 is cleaved from the precursor. Over A144–L195 the chain is Mitochondrial matrix. A cardiolipin-binding region spans residues P148–R167. The segment at V165–L195 is stress-sensor region. The helical transmembrane segment at F196–V216 threads the bilayer. H327 contacts Zn(2+). The active site involves E328. Residues H331 and E392 each contribute to the Zn(2+) site. A disulfide bond links C407 and C465.

Belongs to the peptidase M48 family. Homooligomer. Zn(2+) serves as cofactor. In terms of processing, autocatalytically cleaved in response to mitochondrial depolarization both at the N-terminus and C-terminus to generate the short active form (S-OMA1). Autocatalytic processing at the C-terminus takes place at residues 447-456. The S-OMA1 form is unstable. OMA1 pre-processing by AFG3L2 may participate in maturation before OMA1 autocatalytic cleavage. Degraded by YMEL1 in response to membrane depolarization. Protein turnover is regulated by prohibitin (PHB and PHB2), which promotes degradation of OMA1 in a cardiolipin-binding manner. May form a redox-dependent disulfide bond. Exists in a semi-oxidized state and is activated by prolonged hypoxia.

The protein resides in the mitochondrion inner membrane. Protease activity is activated upon autocatalytic cleavage in response to mitochondrial depolarization. Functionally, metalloprotease that is part of the quality control system in the inner membrane of mitochondria. Activated in response to various mitochondrial stress, leading to the proteolytic cleavage of target proteins, such as OPA1, UQCC3 and DELE1. Involved in the fusion of the mitochondrial inner membranes by mediating cleavage of OPA1 at S1 position, generating the soluble OPA1 (S-OPA1), which cooperates with the membrane form (L-OPA1) to coordinate the fusion of mitochondrial inner membranes. Following stress conditions that induce loss of mitochondrial membrane potential, mediates cleavage of OPA1, leading to excess production of soluble OPA1 (S-OPA1) and negative regulation of mitochondrial fusion. Involved in mitochondrial safeguard in response to transient mitochondrial membrane depolarization (flickering) by catalyzing cleavage of OPA1, leading to excess production of S-OPA1, preventing mitochondrial hyperfusion. Also acts as a regulator of apoptosis: upon BAK and BAX aggregation, mediates cleavage of OPA1, leading to the remodeling of mitochondrial cristae and allowing the release of cytochrome c from mitochondrial cristae. In depolarized mitochondria, may also act as a backup protease for PINK1 by mediating PINK1 cleavage and promoting its subsequent degradation by the proteasome. May also cleave UQCC3 in response to mitochondrial depolarization. Also acts as an activator of the integrated stress response (ISR): in response to mitochondrial stress, mediates cleavage of DELE1 to generate the processed form of DELE1 (S-DELE1), which translocates to the cytosol and activates EIF2AK1/HRI to trigger the ISR. Its role in mitochondrial quality control is essential for regulating lipid metabolism as well as to maintain body temperature and energy expenditure under cold-stress conditions. Binds cardiolipin, possibly regulating its protein turnover. Required for the stability of the respiratory supercomplexes. In Bos taurus (Bovine), this protein is Metalloendopeptidase OMA1, mitochondrial.